The chain runs to 331 residues: Major ferric iron-binding protein (331 aa).

The N-terminal stretch at 1–22 (MKTSIRYALLAAALTAATPALA) is a signal peptide. His31, Glu79, Tyr217, and Tyr218 together coordinate Fe cation.

The protein belongs to the bacterial solute-binding protein 1 family.

The protein localises to the periplasm. This protein may be a central component in the iron-acquisition system. This Neisseria meningitidis serogroup B (strain ATCC BAA-335 / MC58) protein is Major ferric iron-binding protein (fbpA).